Consider the following 213-residue polypeptide: ATP phosphoribosyltransferase (213 aa).

Belongs to the ATP phosphoribosyltransferase family. Short subfamily. Heteromultimer composed of HisG and HisZ subunits.

The protein localises to the cytoplasm. The enzyme catalyses 1-(5-phospho-beta-D-ribosyl)-ATP + diphosphate = 5-phospho-alpha-D-ribose 1-diphosphate + ATP. Its pathway is amino-acid biosynthesis; L-histidine biosynthesis; L-histidine from 5-phospho-alpha-D-ribose 1-diphosphate: step 1/9. Functionally, catalyzes the condensation of ATP and 5-phosphoribose 1-diphosphate to form N'-(5'-phosphoribosyl)-ATP (PR-ATP). Has a crucial role in the pathway because the rate of histidine biosynthesis seems to be controlled primarily by regulation of HisG enzymatic activity. The polypeptide is ATP phosphoribosyltransferase (Thermoanaerobacter pseudethanolicus (strain ATCC 33223 / 39E) (Clostridium thermohydrosulfuricum)).